The following is a 65-amino-acid chain: Small ribosomal subunit protein bS21 (65 aa).

It belongs to the bacterial ribosomal protein bS21 family.

This chain is Small ribosomal subunit protein bS21, found in Aster yellows phytoplasma.